Reading from the N-terminus, the 431-residue chain is Glucose-1-phosphate adenylyltransferase (431 aa).

A beta-D-fructose 1,6-bisphosphate-binding site is contributed by Lys39. Residues Arg40, His46, and Arg52 each coordinate AMP. Tyr114 serves as a coordination point for alpha-D-glucose 1-phosphate. Arg130 contributes to the AMP binding site. Alpha-D-glucose 1-phosphate is bound by residues Gly179, 194 to 195, and Ser212; that span reads EK. The AMP site is built by Glu370 and Arg386. Residues 419–423 and 429–431 contribute to the beta-D-fructose 1,6-bisphosphate site; these read REMLR and QER.

It belongs to the bacterial/plant glucose-1-phosphate adenylyltransferase family. In terms of assembly, homotetramer.

The enzyme catalyses alpha-D-glucose 1-phosphate + ATP + H(+) = ADP-alpha-D-glucose + diphosphate. It functions in the pathway glycan biosynthesis; glycogen biosynthesis. Allosterically activated by fructose-1,6-bisphosphate (F16BP) and inhibited by AMP. Functionally, involved in the biosynthesis of ADP-glucose, a building block required for the elongation reactions to produce glycogen. Catalyzes the reaction between ATP and alpha-D-glucose 1-phosphate (G1P) to produce pyrophosphate and ADP-Glc. In Escherichia coli O45:K1 (strain S88 / ExPEC), this protein is Glucose-1-phosphate adenylyltransferase.